Consider the following 221-residue polypeptide: UPF0502 protein PSPTO_2686 (221 aa).

This sequence belongs to the UPF0502 family.

This is UPF0502 protein PSPTO_2686 from Pseudomonas syringae pv. tomato (strain ATCC BAA-871 / DC3000).